The following is a 250-amino-acid chain: MVTIKKDFIPVSNDNRPGYAMAPAYITVHNTANTAKGADAKMHAKFVKNPNTSESWHFTVDDSVIYQHLPIDENGWHAGDGTNGTGNRKSIGIEICENADGDFEKATSNAQWLIRKLMKENNIPLNRVVPHKKWSGKECPRKLLDHWNSFLNGISSSDTPPKETSPSYPLPSGVIKLTSPYRKGTNILQLQKALAVLHFYPDKGAKNNGIDGVYGPKTANAVKRFQLMNGLTADGIYGPKTKAKLKSKLK.

A signal peptide spans 1–44 (MVTIKKDFIPVSNDNRPGYAMAPAYITVHNTANTAKGADAKMHA). The N-acetylmuramoyl-L-alanine amidase domain maps to 45–141 (KFVKNPNTSE…KKWSGKECPR (97 aa)).

Belongs to the N-acetylmuramoyl-L-alanine amidase 2 family.

The protein localises to the secreted. It carries out the reaction Hydrolyzes the link between N-acetylmuramoyl residues and L-amino acid residues in certain cell-wall glycopeptides.. Autolysins are involved in some important biological processes such as cell separation, cell-wall turnover, competence for genetic transformation, formation of the flagella and sporulation. Could play a role in mother cell lysis with CwlC. The protein is N-acetylmuramoyl-L-alanine amidase CwlH (cwlH) of Bacillus subtilis (strain 168).